Reading from the N-terminus, the 365-residue chain is D-alanine--D-alanine ligase (365 aa).

The region spanning 135–345 is the ATP-grasp domain; it reads KLLLKSFNIP…YESLVDNLVS (211 aa). ATP is bound at residue 168–223; the sequence is KQSLNYPVIVKPAMLGSSIGISIAYNDTQIEKCIEEAFEYDLTVVVEKFMKVREIE. The Mg(2+) site is built by aspartate 298, glutamate 312, and asparagine 314.

Belongs to the D-alanine--D-alanine ligase family. Mg(2+) is required as a cofactor. Requires Mn(2+) as cofactor.

Its subcellular location is the cytoplasm. It catalyses the reaction 2 D-alanine + ATP = D-alanyl-D-alanine + ADP + phosphate + H(+). The protein operates within cell wall biogenesis; peptidoglycan biosynthesis. In terms of biological role, cell wall formation. This Borrelia hermsii (strain HS1 / DAH) protein is D-alanine--D-alanine ligase.